Reading from the N-terminus, the 664-residue chain is Methionine--tRNA ligase (664 aa).

A 'HIGH' region motif is present at residues 15-25 (YYPSGKAHIGH). Residues 310–314 (KMSKS) carry the 'KMSKS' region motif. Lys313 is a binding site for ATP. Residues 563-664 (DFDKIDLRVA…SALPNGAKVK (102 aa)) enclose the tRNA-binding domain.

It belongs to the class-I aminoacyl-tRNA synthetase family. MetG type 2B subfamily. In terms of assembly, homodimer.

The protein resides in the cytoplasm. It carries out the reaction tRNA(Met) + L-methionine + ATP = L-methionyl-tRNA(Met) + AMP + diphosphate. Functionally, is required not only for elongation of protein synthesis but also for the initiation of all mRNA translation through initiator tRNA(fMet) aminoacylation. The polypeptide is Methionine--tRNA ligase (metG) (Listeria monocytogenes serovar 1/2a (strain ATCC BAA-679 / EGD-e)).